The sequence spans 403 residues: Multifunctional CCA protein (403 aa).

Positions 8 and 11 each coordinate ATP. 2 residues coordinate CTP: Gly-8 and Arg-11. Residues Asp-21 and Asp-23 each contribute to the Mg(2+) site. 3 residues coordinate ATP: Arg-91, Arg-137, and Arg-140. Residues Arg-91, Arg-137, and Arg-140 each coordinate CTP. The HD domain occupies 228–329; sequence TGIHTLMVAK…LKVLGLLDVW (102 aa).

The protein belongs to the tRNA nucleotidyltransferase/poly(A) polymerase family. Bacterial CCA-adding enzyme type 1 subfamily. Monomer. Can also form homodimers and oligomers. Requires Mg(2+) as cofactor. Ni(2+) is required as a cofactor.

The enzyme catalyses a tRNA precursor + 2 CTP + ATP = a tRNA with a 3' CCA end + 3 diphosphate. The catalysed reaction is a tRNA with a 3' CCA end + 2 CTP + ATP = a tRNA with a 3' CCACCA end + 3 diphosphate. Catalyzes the addition and repair of the essential 3'-terminal CCA sequence in tRNAs without using a nucleic acid template. Adds these three nucleotides in the order of C, C, and A to the tRNA nucleotide-73, using CTP and ATP as substrates and producing inorganic pyrophosphate. tRNA 3'-terminal CCA addition is required both for tRNA processing and repair. Also involved in tRNA surveillance by mediating tandem CCA addition to generate a CCACCA at the 3' terminus of unstable tRNAs. While stable tRNAs receive only 3'-terminal CCA, unstable tRNAs are marked with CCACCA and rapidly degraded. This Vibrio cholerae serotype O1 (strain ATCC 39315 / El Tor Inaba N16961) protein is Multifunctional CCA protein.